The following is a 779-amino-acid chain: Anion/proton exchange transporter GEF1 (779 aa).

The Cytoplasmic segment spans residues 1–75 (MPTTYVPINQ…REVIWDRAKT (75 aa)). A helical membrane pass occupies residues 76-96 (FITLSSTAIVIGCIAGFLQVF). Topologically, residues 97-154 (TETLVNWKTGHCQRNWLLNKSFCCNGVVNEVTSTSNLLLKRQEFECEAQGLWIAWKGH) are lumenal. Residues 155-175 (VSPFIIFMLLSVLFALISTLL) traverse the membrane as a helical segment. Over 176 to 177 (VK) the chain is Cytoplasmic. The chain crosses the membrane as a helical span at residues 178-198 (YVAPMATGSGISEIKVWVSGF). At 199–203 (EYNKE) the chain is on the lumenal side. The chain crosses the membrane as a helical span at residues 204–224 (FLGFLTLVIKSVALPLAISSG). Residues 225–264 (LSVGKEGPSVHYATCCGYLLTKWLLRDTLTYSSQYEYITA) are Cytoplasmic-facing. Residues 265 to 285 (ASGAGVAVAFGAPIGGVLFGL) traverse the membrane as a helical segment. Residues 286–296 (EEIASANRFNS) lie on the Lumenal side of the membrane. A helical membrane pass occupies residues 297 to 319 (STLWKSYYVALVAITTLKYIDPF). The Cytoplasmic portion of the chain corresponds to 320 to 336 (RNGRVILFNVTYDRDWK). Residues 337–357 (VQEIPIFIALGIFGGLYGKYI) form a helical membrane-spanning segment. The Lumenal segment spans residues 358–369 (SKWNINFIHFRK). A helical transmembrane segment spans residues 370-390 (MYLSSWPVQEVLFLATLTALI). The Cytoplasmic segment spans residues 391–436 (SYFNEFLKLDMTESMGILFHECVKNDNTSTFSHRLCQLDENTHAFE). A helical membrane pass occupies residues 437–457 (FLKIFTSLCFATVIRALLVVV). The Lumenal portion of the chain corresponds to 458 to 465 (SYGARVPA). A helical membrane pass occupies residues 466 to 486 (GIFVPSMAVGATFGRAVSLLV). At 487-500 (ERFISGPSVITPGA) the chain is on the cytoplasmic side. The helical transmembrane segment at 501 to 523 (YAFLGAAATLSGITNLTLTVVVI) threads the bilayer. At 524 to 529 (MFELTG) the chain is on the lumenal side. Residues 530–552 (AFMYIIPLMIVVAITRIILSTSG) form a helical membrane-spanning segment. Over 553 to 779 (ISGGIADQMI…FTTNRNGNVI (227 aa)) the chain is Cytoplasmic. 2 CBS domains span residues 591–659 (MSSK…VNST) and 688–744 (MNES…YREV).

It belongs to the chloride channel (TC 2.A.49) family. As to quaternary structure, homodimer. Interacts with GET3. Post-translationally, proteolytically processed in the secretory pathway by protease KEX2 within the first extracellular loop. However, both the N- and C-terminal products of the cleavage reaction are required for assembly of a functional channel.

The protein resides in the golgi apparatus membrane. Its subcellular location is the endosome membrane. It is found in the prevacuolar compartment membrane. Anion/proton exchange transporter involved in iron and copper cation homeostasis. Involved in intracellular iron metabolism during growth on fermentable and non fermentable carbon sources. Required for proper copper-loading and maturation of multicopper oxidase FET3. Important for adjusting intracellular compartment pH to more alkaline pH under iron limitation. May also transport chloride ions through the plasma membrane. The protein is Anion/proton exchange transporter GEF1 (GEF1) of Saccharomyces cerevisiae (strain ATCC 204508 / S288c) (Baker's yeast).